A 169-amino-acid chain; its full sequence is Centrosomal protein 20 (169 aa).

The segment at 1-104 (MATVGDLKAV…VVEDLNSQSV (104 aa)) is necessary and sufficient for homooligomerization and localization to centrosomes and pericentriolar satellites. The region spanning 49–81 (ENLLINELIREYLAFNKYSYTSSVLTAETGLSE) is the LisH domain. The tract at residues 135–169 (TFRNIPRGRNTKDTHSGPVQLTQTSTEDWHQRRHR) is disordered. Residues 151–160 (GPVQLTQTST) are compositionally biased toward polar residues.

This sequence belongs to the CEP43 family. In terms of assembly, homooligomer; probably required for localization to centrosomes.

Its subcellular location is the cell projection. The protein resides in the cilium. The protein localises to the cytoplasm. It localises to the cytoskeleton. It is found in the cilium basal body. Its subcellular location is the microtubule organizing center. The protein resides in the centrosome. The protein localises to the cytoplasmic granule. It localises to the centriolar satellite. Its function is as follows. Involved in the biogenesis of cilia. Required for the recruitment of PLK1 to centrosomes and S phase progression. In Xenopus laevis (African clawed frog), this protein is Centrosomal protein 20 (Cep20).